A 570-amino-acid polypeptide reads, in one-letter code: Glutamate--tRNA ligase (570 aa).

Residues 107–117 carry the 'HIGH' region motif; that stretch reads PNPDFVLHLGS.

This sequence belongs to the class-I aminoacyl-tRNA synthetase family. Glutamate--tRNA ligase type 2 subfamily.

Its subcellular location is the cytoplasm. It catalyses the reaction tRNA(Glu) + L-glutamate + ATP = L-glutamyl-tRNA(Glu) + AMP + diphosphate. In terms of biological role, catalyzes the attachment of glutamate to tRNA(Glu) in a two-step reaction: glutamate is first activated by ATP to form Glu-AMP and then transferred to the acceptor end of tRNA(Glu). This chain is Glutamate--tRNA ligase, found in Pyrobaculum aerophilum (strain ATCC 51768 / DSM 7523 / JCM 9630 / CIP 104966 / NBRC 100827 / IM2).